The chain runs to 397 residues: Cercosporin biosynthesis regulatory protein CTB8 (397 aa).

A DNA-binding region (zn(2)-C6 fungal-type) is located at residues 26–53 (CTHCSSQKIRCTKERPACARCVNKGLLC). Disordered stretches follow at residues 63-90 (TRRH…APDS) and 173-198 (AEAS…ATTH). Polar residues predominate over residues 74-87 (PETTISNAPTSSVA). A compositionally biased stretch (low complexity) spans 179-197 (PSSSSSPPSQRSDGGRATT).

It is found in the nucleus. Its function is as follows. Transcription regulator of the gene cluster that mediates the biosynthesis of cercosporin, a light-activated, non-host-selective toxin. The perylenequinone chromophore of cercosporin absorbs light energy to attain an electronically-activated triplet state and produces active oxygen species such as the hydroxyl radical, superoxide, hydrogen peroxide or singlet oxygen upon reaction with oxygen molecules. These reactive oxygen species cause damage to various cellular components including lipids, proteins and nucleic acids. The sequence is that of Cercosporin biosynthesis regulatory protein CTB8 from Cercospora beticola (Sugarbeet leaf spot fungus).